The primary structure comprises 455 residues: Probable 1,4-beta-D-glucan cellobiohydrolase A (455 aa).

The first 17 residues, 1–17 (MHQRALLFSAFWTAVQA), serve as a signal peptide directing secretion. The N-linked (GlcNAc...) asparagine glycan is linked to asparagine 81. Glutamate 227 functions as the Nucleophile in the catalytic mechanism. Residue glutamate 232 is the Proton donor of the active site. The N-linked (GlcNAc...) asparagine glycan is linked to asparagine 285.

This sequence belongs to the glycosyl hydrolase 7 (cellulase C) family.

The protein resides in the secreted. It carries out the reaction Hydrolysis of (1-&gt;4)-beta-D-glucosidic linkages in cellulose and cellotetraose, releasing cellobiose from the non-reducing ends of the chains.. In terms of biological role, the biological conversion of cellulose to glucose generally requires three types of hydrolytic enzymes: (1) Endoglucanases which cut internal beta-1,4-glucosidic bonds; (2) Exocellobiohydrolases that cut the disaccharide cellobiose from the non-reducing end of the cellulose polymer chain; (3) Beta-1,4-glucosidases which hydrolyze the cellobiose and other short cello-oligosaccharides to glucose. In Aspergillus flavus (strain ATCC 200026 / FGSC A1120 / IAM 13836 / NRRL 3357 / JCM 12722 / SRRC 167), this protein is Probable 1,4-beta-D-glucan cellobiohydrolase A (cbhA).